Consider the following 43-residue polypeptide: Defensin (43 aa).

Cystine bridges form between Cys3/Cys34, Cys20/Cys39, and Cys24/Cys41.

It is found in the secreted. In terms of biological role, antibacterial peptide active against Gram-positive and Gram-negative bacteria. This chain is Defensin, found in Palomena prasina (Green shield bug).